The chain runs to 123 residues: uncharacterized protein (123 aa).

3 helical membrane-spanning segments follow: residues 7–29, 44–66, and 79–101; these read VKHLIIAGFSAAILSFLISFDAV, FFIHSFLLIGLPLALFTDAVHRI, and LGLYATVVYVSWDSAVWLAAAMA.

It localises to the cell membrane. This is an uncharacterized protein from Bacillus subtilis (strain 168).